Consider the following 95-residue polypeptide: FXYD domain-containing ion transport regulator 6 (95 aa).

Positions 1-18 (MEVVLLFLCGLLAPAVLA) are cleaved as a signal peptide. The Extracellular portion of the chain corresponds to 19 to 35 (SATEQEKEKDPFHYDYQ). Residues 36 to 58 (TLRIGGLVFAVVLFSVGILLILS) traverse the membrane as a helical segment. Topologically, residues 59–95 (RRCKCSFNQKPRAPGDEEAQVENLVTANATEPQKAEN) are cytoplasmic. The interval 69–95 (PRAPGDEEAQVENLVTANATEPQKAEN) is disordered.

This sequence belongs to the FXYD family. In terms of assembly, regulatory subunit of the sodium/potassium-transporting ATPase which is composed of a catalytic alpha subunit, a non-catalytic beta subunit and an additional regulatory subunit. The regulatory subunit, a member of the FXYD protein family, modulates the enzymatic activity in a tissue- and isoform-specific way by changing affinities of the Na+/K+-ATPase toward Na(+), K(+) or ATP.

It is found in the cell membrane. In terms of biological role, associates with and regulates the activity of the sodium/potassium-transporting ATPase (NKA) which catalyzes the hydrolysis of ATP coupled with the exchange of Na(+) and K(+) ions across the plasma membrane. Reduces the apparent affinity for intracellular Na(+) with no change in the apparent affinity for extracellular K(+). In addition to modulating NKA kinetics, may also function as a regulator of NKA localization to the plasma membrane. This chain is FXYD domain-containing ion transport regulator 6 (FXYD6), found in Bos taurus (Bovine).